The primary structure comprises 1000 residues: Probable coatomer subunit beta' (1000 aa).

WD repeat units follow at residues 13 to 52 (ARSD…LVKS), 55 to 94 (VCDV…RVHQ), 97 to 136 (AHSD…AMKQ), 140 to 180 (GHTH…PNFT), 183 to 224 (GHEK…CVQT), 227 to 266 (GHAQ…LETT), and 351 to 391 (LGSS…NKDF). The disordered stretch occupies residues 863–1000 (PRQTETQLKA…MDDLNLDEED (138 aa)). Over residues 901–915 (EPEEEEEQEEFDDDQ) the composition is skewed to acidic residues. A compositionally biased stretch (low complexity) spans 960-969 (SASSQQSAQD). The segment covering 970–1000 (FQDDTQWSDEDFGDAENGDLNMDDLNLDEED) has biased composition (acidic residues).

Belongs to the WD repeat COPB2 family. Oligomeric complex that consists of at least the alpha, beta, beta', gamma, delta, epsilon and zeta subunits.

It is found in the cytoplasm. The protein localises to the golgi apparatus membrane. The protein resides in the cytoplasmic vesicle. Its subcellular location is the COPI-coated vesicle membrane. In terms of biological role, the coatomer is a cytosolic protein complex that binds to dilysine motifs and reversibly associates with Golgi non-clathrin-coated vesicles, which further mediate biosynthetic protein transport from the ER, via the Golgi up to the trans Golgi network. Coatomer complex is required for budding from Golgi membranes, and is essential for the retrograde Golgi-to-ER transport of dilysine-tagged proteins. The sequence is that of Probable coatomer subunit beta' (copb-2) from Caenorhabditis elegans.